Here is a 194-residue protein sequence, read N- to C-terminus: UPF0232 protein MSMEG_0004/MSMEI_0006 (194 aa).

Positions 1-14 (MTGPFDDDGPEEDA) are enriched in acidic residues. Residues 1–81 (MTGPFDDDGP…GPGPDARDPQ (81 aa)) form a disordered region. Positions 30-52 (DLVRRTLEEARGAARSQGKDVGR) are enriched in basic and acidic residues.

It belongs to the UPF0232 family.

This Mycolicibacterium smegmatis (strain ATCC 700084 / mc(2)155) (Mycobacterium smegmatis) protein is UPF0232 protein MSMEG_0004/MSMEI_0006.